The primary structure comprises 1039 residues: uncharacterized protein (1039 aa).

An N-terminal signal peptide occupies residues 1-28; it reads MKLFPRTLLKILVVSFILNFGVTSKSYA. The next 6 helical transmembrane spans lie at 326-346, 354-374, 387-407, 491-511, 517-537, and 551-571; these read IVTAFLTLYVMLFGAKILLAG, YINFILKIIFVTYFSIGLNIT, MIQWAFPFLLNGINGLASWVM, MLVSLALAYPLLVISVAAFMV, CMVSIVILGILAPLFVPMFLF, and MISFLLQPMVVVTFMITMFSV. The interval 654-680 is disordered; it reads KPNQTCDPKAADADTKCNPKPGDSSTS. A helical membrane pass occupies residues 710–730; it reads IKDILLALVTACFTLYLMYNF. 3 disordered regions span residues 799–875, 917–949, and 1004–1039; these read LVKG…PTTV, IKEAVPESQKEEPKEPRVKHTTEVEPELNLDEN, and LYRSVGGRAKDKATERNDGTIENRSKKIDSGSDENP. Positions 802–811 are enriched in gly residues; the sequence is GSGGGGGSEG. The segment covering 812-836 has biased composition (low complexity); that stretch reads GDSFTSGGLRETSSTAATPSSALSS. The span at 843–861 shows a compositional bias: polar residues; that stretch reads GTATPSSASEEMLDTSFSN. 2 stretches are compositionally biased toward basic and acidic residues: residues 917–939 and 1004–1033; these read IKEAVPESQKEEPKEPRVKHTTE and LYRSVGGRAKDKATERNDGTIENRSKKIDS.

Belongs to the TrbL/VirB6 family.

Its subcellular location is the cell membrane. This is an uncharacterized protein from Rickettsia bellii (strain RML369-C).